We begin with the raw amino-acid sequence, 443 residues long: tRNA modification GTPase MnmE (443 aa).

Positions 23, 82, and 121 each coordinate (6S)-5-formyl-5,6,7,8-tetrahydrofolate. Residues 215–364 (GTSIVLAGHP…LKQFIQQWMQ (150 aa)) form the TrmE-type G domain. K(+) is bound at residue N225. GTP is bound by residues 225–230 (NAGKSS), 244–250 (TDIPGTT), and 269–272 (DSAG). S229 lines the Mg(2+) pocket. 3 residues coordinate K(+): T244, I246, and T249. T250 serves as a coordination point for Mg(2+). K443 contributes to the (6S)-5-formyl-5,6,7,8-tetrahydrofolate binding site.

This sequence belongs to the TRAFAC class TrmE-Era-EngA-EngB-Septin-like GTPase superfamily. TrmE GTPase family. Homodimer. Heterotetramer of two MnmE and two MnmG subunits. The cofactor is K(+).

Its subcellular location is the cytoplasm. In terms of biological role, exhibits a very high intrinsic GTPase hydrolysis rate. Involved in the addition of a carboxymethylaminomethyl (cmnm) group at the wobble position (U34) of certain tRNAs, forming tRNA-cmnm(5)s(2)U34. In Chlamydia abortus (strain DSM 27085 / S26/3) (Chlamydophila abortus), this protein is tRNA modification GTPase MnmE.